The sequence spans 277 residues: Adaptin ear-binding coat-associated protein 1 (277 aa).

The interval 164–277 (GNITAKKGGT…APQPSNWVQF (114 aa)) is disordered. Residues 187 to 201 (LPPPPGGKVTIPPPS) show a composition bias toward pro residues. Phosphothreonine is present on Thr-211. A compositionally biased stretch (low complexity) spans 222–234 (SNDSDILLDLDSP). Pro residues predominate over residues 235-245 (APVPTSAPAPA). Short sequence motifs (WXXF motif) lie at residues 254–257 (WGDF) and 274–277 (WVQF). Polar residues predominate over residues 258–277 (STASSSVPNQAPQPSNWVQF).

The protein belongs to the NECAP family. In terms of assembly, interacts with AP1G1 and AP2A1 components of the adapter protein complexes AP-1 and AP-2. Interacts with the GAE domain proteins GGA1, GGA2 and GGA3. Interacts with AP2A2. Expressed predominantly in brain (at protein level).

It is found in the cytoplasmic vesicle. The protein localises to the clathrin-coated vesicle membrane. Its subcellular location is the cell membrane. Involved in endocytosis. This chain is Adaptin ear-binding coat-associated protein 1 (Necap1), found in Rattus norvegicus (Rat).